A 449-amino-acid polypeptide reads, in one-letter code: Plasmepsin IV (449 aa).

Over 1 to 37 the chain is Cytoplasmic; sequence MALTVKEEEFSNTLIKNASAFDRLKLGNLKNLKIQKK. The propeptide occupies 1–121; that stretch reads MALTVKEEEF…SGYAQKGYLG (121 aa). The chain crosses the membrane as a helical; Signal-anchor for type II membrane protein span at residues 38 to 58; the sequence is LQFLYLILFVLITGVFFFFLI. At 59–449 the chain is on the lumenal side; sequence GNFYSHRKLY…SVGFAVAKNL (391 aa). The region spanning 137–444 is the Peptidase A1 domain; it reads FYGEGQIGTN…DYEKESVGFA (308 aa). Residue D155 is part of the active site. An intrachain disulfide couples C168 to C173. Residue D335 is part of the active site. C370 and C406 are disulfide-bonded.

This sequence belongs to the peptidase A1 family. Component of the hemozoin formation complex (HFC) composed of falcipains FP2A and/or FP2B, plasmepsins PMII, PMIII/HAP and PMIV, heme detoxifying protein HDP and falcilysin FLN. The HFC complex is involved in hemoglobin degradation and detoxification of heme in the food vacuole during the asexual blood stage. Post-translationally, proteolytically cleaved into the soluble active mature form by cysteine proteases in the digestive vacuole of trophozoites. Proteolysis requires an acidic environment. Autoprocessing or transprocessing by other plasmepsins such as PMII may serve as an alternate activation system.

The protein resides in the membrane. It is found in the vacuole lumen. It catalyses the reaction Hydrolysis of the bonds linking certain hydrophobic residues in hemoglobin or globin. Also cleaves small molecules substrates such as Ala-Leu-Glu-Arg-Thr-Phe-|-Phe(NO2)-Ser-Phe-Pro-Thr.. Inhibited by KNI derived compounds KNI-10333 and to a lesser extent KNI-10743. In terms of biological role, during the asexual blood stage, catalyzes the cleavage of denatured host hemoglobin (Hb). Digestion of host Hb is an essential step which provides the parasite with amino acids for protein synthesis, and regulates osmolarity. This Plasmodium falciparum (isolate 3D7) protein is Plasmepsin IV.